Consider the following 622-residue polypeptide: Probable potassium transport system protein Kup (622 aa).

Transmembrane regions (helical) follow at residues 9 to 29 (LPAV…TSPL), 52 to 72 (FLSL…LAFV), 101 to 121 (VLLV…VITP), 137 to 157 (PALT…LFVI), 169 to 189 (FGPV…ISIF), 213 to 233 (VAFF…ALYA), 247 to 267 (WFTV…ALIL), 287 to 309 (FPMV…SGVF), 337 to 357 (IYIP…VVTF), 363 to 383 (LAAA…ILAC), 396 to 416 (VVKI…LANV), and 419 to 439 (FFAG…VMAT).

Belongs to the HAK/KUP transporter (TC 2.A.72) family.

The protein localises to the cell inner membrane. It catalyses the reaction K(+)(in) + H(+)(in) = K(+)(out) + H(+)(out). Functionally, transport of potassium into the cell. Likely operates as a K(+):H(+) symporter. The polypeptide is Probable potassium transport system protein Kup (Tolumonas auensis (strain DSM 9187 / NBRC 110442 / TA 4)).